The following is a 204-amino-acid chain: ATP-dependent Clp protease proteolytic subunit (204 aa).

The active-site Nucleophile is the Ser-102. His-127 is an active-site residue.

Belongs to the peptidase S14 family. In terms of assembly, fourteen ClpP subunits assemble into 2 heptameric rings which stack back to back to give a disk-like structure with a central cavity, resembling the structure of eukaryotic proteasomes.

It localises to the cytoplasm. It catalyses the reaction Hydrolysis of proteins to small peptides in the presence of ATP and magnesium. alpha-casein is the usual test substrate. In the absence of ATP, only oligopeptides shorter than five residues are hydrolyzed (such as succinyl-Leu-Tyr-|-NHMec, and Leu-Tyr-Leu-|-Tyr-Trp, in which cleavage of the -Tyr-|-Leu- and -Tyr-|-Trp bonds also occurs).. In terms of biological role, cleaves peptides in various proteins in a process that requires ATP hydrolysis. Has a chymotrypsin-like activity. Plays a major role in the degradation of misfolded proteins. The protein is ATP-dependent Clp protease proteolytic subunit of Neisseria meningitidis serogroup C (strain 053442).